The chain runs to 336 residues: Effector SCP41 (336 aa).

An N-terminal signal peptide occupies residues 1–19 (MRTETASLLLLAALSVAEE). 2 disordered regions span residues 59-99 (LFSP…STNN) and 189-230 (PVGN…GQKG). The span at 63–74 (QQQQQQQQQQQQ) shows a compositional bias: low complexity.

Interacts with A.thaliana CBP60G; the interaction is direct. Interacts with A.thaliana SARD1. Interacts with G.hirsutum CBP60B.

It is found in the secreted. The protein localises to the host nucleus. Functionally, effector that binds transcription regulators in the host plant to suppress the host's innate immune response. Inhibits the host plant transcription regulators CBP60G and SARD1. In Verticillium dahliae (strain VdLs.17 / ATCC MYA-4575 / FGSC 10137) (Verticillium wilt), this protein is Effector SCP41.